Reading from the N-terminus, the 547-residue chain is MNPSTAQARVVVDELVRGGVHDVVLCPGSRNAPLAFALADADRAGRLRLHVRIDERTAGFLAIGLAVADRAPVCVAMTSGTAVANLGPAVVEANYARVPLIVLSANRPYELLGTGANQTFEQLGYFGNQVRANISLGLAPELSAGSPGDMTSLNAQWRSATCRVVVAATGSRSANAGPVQFDIPLREPLVPTFDDDGSCPPGRPDGKPWTHTPPVTFDQPLDIDLTPDTVVIAGHGAGVHPNLADLPTVAEPTAPPAANPLHPMALRLLRPKQVIMLGRPTLHRPVSALLADPSVPVYALTTGPRWPDVSGNSQATGTRAVTSGTPDPAWLRRCKEVNDHAVAAVREQLAAHPLTTGLHVAAAVADAVRPGDQLVLGASNPVRDAALVGFTPHGVQVRSNRGVAGIDGTVSTAIGAALAHDRTGGRTIALMGDLTFVHDSSGLLIGPTEPTPRNLTIVVSNDNGGGIFELLEQGDPRFSDVSSRVFGTPHDVDVGALCRAYHVDNRQIEVGQLADALDEPHEGMRVLEVKADRSSLRALHASIKAAL.

This sequence belongs to the TPP enzyme family. MenD subfamily. Homodimer. The cofactor is Mg(2+). Mn(2+) serves as cofactor. Thiamine diphosphate is required as a cofactor.

The catalysed reaction is isochorismate + 2-oxoglutarate + H(+) = 5-enolpyruvoyl-6-hydroxy-2-succinyl-cyclohex-3-ene-1-carboxylate + CO2. The protein operates within quinol/quinone metabolism; 1,4-dihydroxy-2-naphthoate biosynthesis; 1,4-dihydroxy-2-naphthoate from chorismate: step 2/7. It functions in the pathway quinol/quinone metabolism; menaquinone biosynthesis. Catalyzes the thiamine diphosphate-dependent decarboxylation of 2-oxoglutarate and the subsequent addition of the resulting succinic semialdehyde-thiamine pyrophosphate anion to isochorismate to yield 2-succinyl-5-enolpyruvyl-6-hydroxy-3-cyclohexene-1-carboxylate (SEPHCHC). This Mycobacterium sp. (strain JLS) protein is 2-succinyl-5-enolpyruvyl-6-hydroxy-3-cyclohexene-1-carboxylate synthase.